The sequence spans 407 residues: Cysteine desulfurase (407 aa).

Residue lysine 226 is modified to N6-(pyridoxal phosphate)lysine. Residue cysteine 364 is the Cysteine persulfide intermediate of the active site.

The protein belongs to the class-V pyridoxal-phosphate-dependent aminotransferase family. Csd subfamily. Homodimer. Interacts with SufE and the SufBCD complex composed of SufB, SufC and SufD. The interaction with SufE is required to mediate the direct transfer of the sulfur atom from the S-sulfanylcysteine. It depends on pyridoxal 5'-phosphate as a cofactor.

Its subcellular location is the cytoplasm. It catalyses the reaction (sulfur carrier)-H + L-cysteine = (sulfur carrier)-SH + L-alanine. The catalysed reaction is L-selenocysteine + AH2 = hydrogenselenide + L-alanine + A + H(+). The protein operates within cofactor biosynthesis; iron-sulfur cluster biosynthesis. In terms of biological role, cysteine desulfurases mobilize the sulfur from L-cysteine to yield L-alanine, an essential step in sulfur metabolism for biosynthesis of a variety of sulfur-containing biomolecules. Component of the suf operon, which is activated and required under specific conditions such as oxidative stress and iron limitation. Acts as a potent selenocysteine lyase in vitro, that mobilizes selenium from L-selenocysteine. Selenocysteine lyase activity is however unsure in vivo. This Pectobacterium carotovorum subsp. carotovorum (strain PC1) protein is Cysteine desulfurase.